A 267-amino-acid polypeptide reads, in one-letter code: Methylglyoxal reductase DkgB (267 aa).

Tyr39 acts as the Proton donor in catalysis. Residue His97 coordinates substrate. Met179 to Asn231 is an NADP(+) binding site.

It belongs to the aldo/keto reductase family. In terms of assembly, monomer.

The protein resides in the cytoplasm. The enzyme catalyses hydroxyacetone + NADP(+) = methylglyoxal + NADPH + H(+). Aldo-keto reductase that significantly contributes to cellular methylglyoxal detoxification by catalyzing the NADPH-dependent conversion of methylglyoxal to acetol. The protein is Methylglyoxal reductase DkgB of Salmonella typhi.